We begin with the raw amino-acid sequence, 1327 residues long: Putative ATP-dependent RNA helicase ucp12 (1327 aa).

Disordered regions lie at residues 1 to 58 (MGSK…KQLV) and 201 to 222 (QAARASSAAKPPPKASQKNEKV). Over residues 18 to 41 (SKNKEKNIKGKKKNSLDPIEKNKQ) the composition is skewed to basic and acidic residues. A compositionally biased stretch (polar residues) spans 42-58 (ETAGLQTTSRPTAKQLV). One can recognise a UBA domain in the interval 276–315 (EPDTSIVNDLISLGFRDIHAKEACQYCVSLEDALEWLIIH). One can recognise an RWD domain in the interval 405–504 (DDVSALQSIL…NHLQENIEDF (100 aa)). Positions 587 to 756 (MDAIQHSQVV…FGNAGHLHIH (170 aa)) constitute a Helicase ATP-binding domain. 600–607 (GETGSGKS) contributes to the ATP binding site. The DEAH box signature appears at 703 to 706 (DEVH). Residues 797–968 (LISRLVSSID…QVCLNVVPLV (172 aa)) enclose the Helicase C-terminal domain.

The protein belongs to the DEAD box helicase family. DEAH subfamily.

It is found in the cytoplasm. It carries out the reaction ATP + H2O = ADP + phosphate + H(+). In terms of biological role, probable ATP-binding RNA helicase. The sequence is that of Putative ATP-dependent RNA helicase ucp12 (ucp12) from Schizosaccharomyces pombe (strain 972 / ATCC 24843) (Fission yeast).